The sequence spans 254 residues: Thiazole synthase (254 aa).

Lys93 (schiff-base intermediate with DXP) is an active-site residue. Residues Gly154, 181-182, and 203-204 each bind 1-deoxy-D-xylulose 5-phosphate; these read AG and NT.

It belongs to the ThiG family. Homotetramer. Forms heterodimers with either ThiH or ThiS.

The protein localises to the cytoplasm. It catalyses the reaction [ThiS sulfur-carrier protein]-C-terminal-Gly-aminoethanethioate + 2-iminoacetate + 1-deoxy-D-xylulose 5-phosphate = [ThiS sulfur-carrier protein]-C-terminal Gly-Gly + 2-[(2R,5Z)-2-carboxy-4-methylthiazol-5(2H)-ylidene]ethyl phosphate + 2 H2O + H(+). Its pathway is cofactor biosynthesis; thiamine diphosphate biosynthesis. Its function is as follows. Catalyzes the rearrangement of 1-deoxy-D-xylulose 5-phosphate (DXP) to produce the thiazole phosphate moiety of thiamine. Sulfur is provided by the thiocarboxylate moiety of the carrier protein ThiS. In vitro, sulfur can be provided by H(2)S. In Ruegeria pomeroyi (strain ATCC 700808 / DSM 15171 / DSS-3) (Silicibacter pomeroyi), this protein is Thiazole synthase.